A 184-amino-acid polypeptide reads, in one-letter code: Probable chemoreceptor glutamine deamidase CheD (184 aa).

It belongs to the CheD family.

It carries out the reaction L-glutaminyl-[protein] + H2O = L-glutamyl-[protein] + NH4(+). In terms of biological role, probably deamidates glutamine residues to glutamate on methyl-accepting chemotaxis receptors (MCPs), playing an important role in chemotaxis. The sequence is that of Probable chemoreceptor glutamine deamidase CheD from Rhizobium rhizogenes (strain K84 / ATCC BAA-868) (Agrobacterium radiobacter).